The chain runs to 172 residues: Large ribosomal subunit protein uL10 (172 aa).

Belongs to the universal ribosomal protein uL10 family. As to quaternary structure, part of the ribosomal stalk of the 50S ribosomal subunit. The N-terminus interacts with L11 and the large rRNA to form the base of the stalk. The C-terminus forms an elongated spine to which 3 L12 dimers bind in a sequential fashion forming a heptameric L10(L12)2(L12)2(L12)2 complex.

Functionally, forms part of the ribosomal stalk, playing a central role in the interaction of the ribosome with GTP-bound translation factors. This Agrobacterium fabrum (strain C58 / ATCC 33970) (Agrobacterium tumefaciens (strain C58)) protein is Large ribosomal subunit protein uL10.